The sequence spans 1424 residues: DNA-directed RNA polymerase subunit beta' (1424 aa).

Positions 60, 62, 75, and 78 each coordinate Zn(2+). Mg(2+) contacts are provided by Asp449, Asp451, and Asp453. Positions 783, 857, 864, and 867 each coordinate Zn(2+).

Belongs to the RNA polymerase beta' chain family. In terms of assembly, the RNAP catalytic core consists of 2 alpha, 1 beta, 1 beta' and 1 omega subunit. When a sigma factor is associated with the core the holoenzyme is formed, which can initiate transcription. Mg(2+) is required as a cofactor. It depends on Zn(2+) as a cofactor.

It catalyses the reaction RNA(n) + a ribonucleoside 5'-triphosphate = RNA(n+1) + diphosphate. DNA-dependent RNA polymerase catalyzes the transcription of DNA into RNA using the four ribonucleoside triphosphates as substrates. The protein is DNA-directed RNA polymerase subunit beta' of Treponema denticola (strain ATCC 35405 / DSM 14222 / CIP 103919 / JCM 8153 / KCTC 15104).